The sequence spans 238 residues: Probable septum site-determining protein MinC (238 aa).

Belongs to the MinC family. In terms of assembly, interacts with MinD and FtsZ.

In terms of biological role, cell division inhibitor that blocks the formation of polar Z ring septums. Rapidly oscillates between the poles of the cell to destabilize FtsZ filaments that have formed before they mature into polar Z rings. Prevents FtsZ polymerization. The polypeptide is Probable septum site-determining protein MinC (Blochmanniella floridana).